We begin with the raw amino-acid sequence, 480 residues long: Aspartyl/glutamyl-tRNA(Asn/Gln) amidotransferase subunit B (480 aa).

This sequence belongs to the GatB/GatE family. GatB subfamily. As to quaternary structure, heterotrimer of A, B and C subunits.

It catalyses the reaction L-glutamyl-tRNA(Gln) + L-glutamine + ATP + H2O = L-glutaminyl-tRNA(Gln) + L-glutamate + ADP + phosphate + H(+). It carries out the reaction L-aspartyl-tRNA(Asn) + L-glutamine + ATP + H2O = L-asparaginyl-tRNA(Asn) + L-glutamate + ADP + phosphate + 2 H(+). Allows the formation of correctly charged Asn-tRNA(Asn) or Gln-tRNA(Gln) through the transamidation of misacylated Asp-tRNA(Asn) or Glu-tRNA(Gln) in organisms which lack either or both of asparaginyl-tRNA or glutaminyl-tRNA synthetases. The reaction takes place in the presence of glutamine and ATP through an activated phospho-Asp-tRNA(Asn) or phospho-Glu-tRNA(Gln). This is Aspartyl/glutamyl-tRNA(Asn/Gln) amidotransferase subunit B from Streptococcus pneumoniae serotype 4 (strain ATCC BAA-334 / TIGR4).